The chain runs to 173 residues: Large ribosomal subunit protein uL10 (173 aa).

Belongs to the universal ribosomal protein uL10 family. In terms of assembly, part of the ribosomal stalk of the 50S ribosomal subunit. The N-terminus interacts with L11 and the large rRNA to form the base of the stalk. The C-terminus forms an elongated spine to which L12 dimers bind in a sequential fashion forming a multimeric L10(L12)X complex.

Forms part of the ribosomal stalk, playing a central role in the interaction of the ribosome with GTP-bound translation factors. The chain is Large ribosomal subunit protein uL10 from Cupriavidus necator (strain ATCC 17699 / DSM 428 / KCTC 22496 / NCIMB 10442 / H16 / Stanier 337) (Ralstonia eutropha).